The following is a 1102-amino-acid chain: Voltage-gated delayed rectifier potassium channel KCNH8 (1102 aa).

Residues 1-225 are Cytoplasmic-facing; that stretch reads MPVMKGLLAP…HFSTFKAGWD (225 aa). Residues 18–90 form the PAS domain; that stretch reads IATRFDGTHS…LQIEKSLEEK (73 aa). The PAC domain maps to 93-145; sequence FKGEIMFYKKNGAPFWCLLDIVPIKNEKGDVVLFLASFKDITDTKVKITSEDK. Residues 226 to 246 form a helical membrane-spanning segment; that stretch reads WLILLATFYVAVTVPYNVCFI. Residues 247–255 are Extracellular-facing; that stretch reads GNEDLSTTR. The chain crosses the membrane as a helical span at residues 256–276; it reads STTVSDIAVEILFIIDIILNF. The Cytoplasmic segment spans residues 277–298; it reads RTTYVSKSGQVIFEARSICIHY. A helical transmembrane segment spans residues 299-319; it reads VTTWFIIDLIAALPFDLLYAF. A glycan (N-linked (GlcNAc...) asparagine) is linked at Asn320. At 320-327 the chain is on the extracellular side; the sequence is NVTVVSLV. The chain crosses the membrane as a helical; Voltage-sensor span at residues 328 to 348; sequence HLLKTVRLLRLLRLLQKLDRY. The Cytoplasmic portion of the chain corresponds to 349 to 353; sequence SQHST. Residues 354–374 form a helical membrane-spanning segment; it reads IVLTLLMSMFALLAHWMACIW. The Extracellular portion of the chain corresponds to 375-419; sequence YVIGKMEREDNSLLKWEVGWLHELGKRLESPYYGNNTLGGPSIRS. A glycan (N-linked (GlcNAc...) asparagine) is linked at Asn409. The pore-forming intramembrane region spans 420–440; it reads AYIAALYFTLSSLTSVGFGNV. The Selectivity filter signature appears at 434–439; that stretch reads SVGFGN. At 441–448 the chain is on the extracellular side; it reads SANTDAEK. Residues 449–469 form a helical membrane-spanning segment; sequence IFSICTMLIGALMHALVFGNV. The Cytoplasmic portion of the chain corresponds to 470 to 1102; it reads TAIIQRMYSR…DVKDSKAINV (633 aa). The segment at 551–668 is cNMP-binding domain; the sequence is LFECASRGCL…HKFVEDIQHD (118 aa). Disordered stretches follow at residues 683–744, 762–793, 818–845, and 960–983; these read SRLS…KTGS, PFHSPIRVSSANSPKTKQEADPPNHGTRKEKN, EDGNSSEETQTFDFGSEQIRPEPRISPS, and LVGSNPQRTEAHEQSPVDSELHHS. Acidic residues predominate over residues 710–723; sequence VEDEEEEEVEEEET. Positions 777-793 are enriched in basic and acidic residues; that stretch reads TKQEADPPNHGTRKEKN. Over residues 968-982 the composition is skewed to basic and acidic residues; that stretch reads TEAHEQSPVDSELHH.

Belongs to the potassium channel family. H (Eag) (TC 1.A.1.20) subfamily. Kv12.1/KCNH8 sub-subfamily. The potassium channel is probably composed of a homo- or heterotetrameric complex of pore-forming alpha subunits that can associate with modulating beta subunits. As to expression, detected in superior cervical, mesenteric and coeliac ganglia. Expressed in brain (piriform cortex, olfactory tubercle, cerebral cortex, hippocampus pyramidial cells and dentate gyrus and basal ganglia of caudate/putamen and accumbens nucleus). Expressed in pituitary.

It localises to the membrane. It catalyses the reaction K(+)(in) = K(+)(out). Its function is as follows. Pore-forming (alpha) subunit of a voltage-gated delayed rectifier potassium channel that mediates outward-rectifying potassium currents. Elicits a slowly activating, non-inactivating and slowly deactivation outwards potassium current at depolarizating voltages from -30 mV to +50mV. Shows no obvious change in the activation rate from different holding potentials. Activation is strongly dependent on the pH of the external solution. The sequence is that of Voltage-gated delayed rectifier potassium channel KCNH8 from Rattus norvegicus (Rat).